The sequence spans 201 residues: MSIKNLPADYLLAAQQGDIDKVKTCLALGVDINTCDRQGKTAITLASLYQQYACVQALIDAGADINKQDHTCLNPFLISCLNDDLTLLRIILPAKPDLNCVTRFGGVGLTPACEKGHLSIVKELLAHTEINVNQTNHVGWTPLLEAIVLNDGGIKQQAIVQLLLEHGASPHLTDKYGKTPLELARERGFEEIAQLLIAAGA.

ANK repeat units lie at residues N5–T34, Q38–K67, T71–C100, F104–Q134, V138–L172, and Y176–A201.

The chain is Putative ankyrin repeat protein YahD (yahD) from Escherichia coli (strain K12).